A 246-amino-acid chain; its full sequence is Putative carboxymethylenebutenolidase (246 aa).

Residues Cys127, Asp183, and His215 contribute to the active site.

The protein belongs to the dienelactone hydrolase family.

It carries out the reaction 2-(5-oxo-2,5-dihydrofuran-2-ylidene)acetate + H2O = 4-oxohex-2-enedioate + H(+). The polypeptide is Putative carboxymethylenebutenolidase (Synechocystis sp. (strain ATCC 27184 / PCC 6803 / Kazusa)).